The following is a 74-amino-acid chain: Conotoxin AbVIH (74 aa).

The signal sequence occupies residues 1–17 (VLIIAVLFLTACQLTTA). The propeptide occupies 18–40 (ETSSRGKQKHRALRSTDKDSRMT). The disordered stretch occupies residues 19–40 (TSSRGKQKHRALRSTDKDSRMT). 3 disulfide bridges follow: cysteine 43–cysteine 57, cysteine 50–cysteine 61, and cysteine 56–cysteine 68.

This sequence belongs to the conotoxin O1 superfamily. In terms of tissue distribution, expressed by the venom duct.

Its subcellular location is the secreted. The protein is Conotoxin AbVIH of Conus abbreviatus (Abbreviated cone).